The chain runs to 476 residues: Dihydrolipoyl dehydrogenase (476 aa).

FAD is bound by residues Glu36–Cys45, Lys54, and Ala117. Residues Cys45 and Cys50 are joined by a disulfide bond. NAD(+) is bound by residues Gly182–Ile186, Asp205, Val238, and Ala271–Arg274. FAD-binding residues include Asp314 and Ala322. Residue His446 is the Proton acceptor of the active site.

This sequence belongs to the class-I pyridine nucleotide-disulfide oxidoreductase family. Homodimer. FAD is required as a cofactor.

It is found in the cytoplasm. The catalysed reaction is N(6)-[(R)-dihydrolipoyl]-L-lysyl-[protein] + NAD(+) = N(6)-[(R)-lipoyl]-L-lysyl-[protein] + NADH + H(+). Lipoamide dehydrogenase is a component of the alpha-ketoacid dehydrogenase complexes. This chain is Dihydrolipoyl dehydrogenase (lpdA), found in Buchnera aphidicola subsp. Schizaphis graminum (strain Sg).